The following is a 50-amino-acid chain: Protein PsbN (50 aa).

The helical transmembrane segment at 14–34 (IAVTILAILLALTGFGLWSAF) threads the bilayer.

This sequence belongs to the PsbN family.

It localises to the cellular thylakoid membrane. In terms of biological role, may play a role in photosystem I and II biogenesis. This Prochlorococcus marinus (strain MIT 9215) protein is Protein PsbN.